We begin with the raw amino-acid sequence, 683 residues long: MSAQDFLVELGTEELPPKALASLGDAFLAGIEKGLQAAGLNYTGKQVYAAPRRLAVLIRQLDVQQPDRSINIDGPPMQAAFKDGEPTQAALGFAKKCGVELAEIDQSGAKLRFSQHIPGKATASLLPTIIEDSLNDLPIPKRMRWAASREEFVRPTQWLVMLLGDQVVDCTILSQKAGRESRGHRFHHPENVVITTPANYVEDLRKAYVLADFAERRELISKRTAELAMQQEGTAIVPPALLDEVTALVEWPVPLVCSFEERFLEVPQEALITTMQDNQKYFCLLDSEGKLLPRFITVANVESRDPKQIVQGNEKVVRPRLTDAEFFFKQDKKQPLETFNERLKNVVFQAQLGTVYDKAERVSKLAAFIAPLIGGDAQRAGRAGLLSKCDLATEMVGEFPEMQGVAGYYYALNDGEPQDVALALNEQYMPRGAGAELPQTLTGAAVAIADKLDTLVGIFGIGMLPTGSKDPYALRRAALGVLRILIEKQLDLNLTGAVEFAVKQFGAKVKAAGLAEQVLEFIFDRLRARYEDEGIDVATYLSVRALQPGSALDFDQRVQAVQAFRKLPEAEALAAVNKRVSNLLSKAEGAIAEQVEPKYFDNANEFSLYSAIQQADQAVQPMAAARQYSESLARLAALRDPVDAFFEAVMVNAEDAKVRANRYALLSRLRGLFLGVADISLLG.

The protein belongs to the class-II aminoacyl-tRNA synthetase family. As to quaternary structure, tetramer of two alpha and two beta subunits.

Its subcellular location is the cytoplasm. The catalysed reaction is tRNA(Gly) + glycine + ATP = glycyl-tRNA(Gly) + AMP + diphosphate. The sequence is that of Glycine--tRNA ligase beta subunit from Pseudomonas putida (strain GB-1).